Reading from the N-terminus, the 484-residue chain is Toluene efflux pump outer membrane protein TtgC (484 aa).

A signal peptide spans 1 to 17 (MTKSLLSLAVTAFILGG). The N-palmitoyl cysteine moiety is linked to residue Cys18. The S-diacylglycerol cysteine moiety is linked to residue Cys18.

Belongs to the outer membrane factor (OMF) (TC 1.B.17) family.

Its subcellular location is the cell outer membrane. Functionally, the outer membrane component of a constitutive organic solvent efflux system. Is involved in export of toluene, styrene, m-xylene, propylbenzene and ethylbenzene. Also exports AMP and the antibiotics carbenicillin, nalidixic acid, chloramphenicol and tetracycline. The sequence is that of Toluene efflux pump outer membrane protein TtgC (ttgC) from Pseudomonas putida (strain DOT-T1E).